Here is a 626-residue protein sequence, read N- to C-terminus: Probable potassium transport system protein Kup 3 (626 aa).

12 helical membrane-spanning segments follow: residues 10–30 (LATL…TSPL), 51–71 (VLGI…LKYV), 107–127 (VLLG…TPAI), 141–161 (PAFK…LFIF), 173–193 (FGPV…AAIV), 216–236 (LLGF…EALY), 251–271 (WLGY…ALLL), 293–313 (LVAL…SGAF), 341–361 (IYLP…VIEF), 371–391 (YGIA…AVAV), 401–421 (AMLG…ANSV), and 423–443 (IADG…LLTT).

This sequence belongs to the HAK/KUP transporter (TC 2.A.72) family.

The protein localises to the cell inner membrane. The enzyme catalyses K(+)(in) + H(+)(in) = K(+)(out) + H(+)(out). Its function is as follows. Transport of potassium into the cell. Likely operates as a K(+):H(+) symporter. The sequence is that of Probable potassium transport system protein Kup 3 from Dechloromonas aromatica (strain RCB).